A 277-amino-acid chain; its full sequence is Phosphoenolpyruvate synthase regulatory protein (277 aa).

ADP is bound at residue 157 to 164 (GVSRCGKT).

Belongs to the pyruvate, phosphate/water dikinase regulatory protein family. PSRP subfamily.

The enzyme catalyses [pyruvate, water dikinase] + ADP = [pyruvate, water dikinase]-phosphate + AMP + H(+). It catalyses the reaction [pyruvate, water dikinase]-phosphate + phosphate + H(+) = [pyruvate, water dikinase] + diphosphate. In terms of biological role, bifunctional serine/threonine kinase and phosphorylase involved in the regulation of the phosphoenolpyruvate synthase (PEPS) by catalyzing its phosphorylation/dephosphorylation. The protein is Phosphoenolpyruvate synthase regulatory protein of Escherichia coli O6:K15:H31 (strain 536 / UPEC).